A 156-amino-acid chain; its full sequence is UPF0756 membrane protein Exig_2210 (156 aa).

The next 5 membrane-spanning stretches (helical) occupy residues 5–25 (LFLI…LIIA), 52–72 (WGVT…DIGF), 83–103 (IGII…HGVG), 109–129 (PLVT…FRGV), and 131–151 (VGPL…DIIV).

It belongs to the UPF0756 family.

Its subcellular location is the cell membrane. The chain is UPF0756 membrane protein Exig_2210 from Exiguobacterium sibiricum (strain DSM 17290 / CCUG 55495 / CIP 109462 / JCM 13490 / 255-15).